The sequence spans 433 residues: MNKNIVILGTQWGDEGKGKVVDCLTKDSSYVVRYQGGHNAGHTLVVNDKKIILHLIPSGLLHKNVIGIIANGVVVSPFELIKEIKMLETHNIFVHKRLFISNSSPLILQYHIEMDIAREKKLGISALGTTGRGIGPAYEDKIARRALRIGDLKNEKTLSIRLEKIVNYYNHQLVSFYKHKPVDYKIILRDLLPTIDLIYDMIKDTTSILHTAIQSNKKIIFEGAQGSFLDIDHGTYPYVTSSNSTIGGVITGTGVGSKSLDYILGVTKAYSTRVGYGPFPTELFDDVDKHFSKKGHEFGSTTGRKRRTGWLDAVALCRSVRINSLSGLCITKLDVLDGLHEIKICTAYKNINTLEIISFPDIDEWKNIEPIYETYPGWNKKTLGIKKLIDLPYEARNYINRIEEITQIPVDIISTGPDRSDIIFVRDIFFIKK.

GTP contacts are provided by residues 13 to 19 and 41 to 43; these read GDEGKGK and GHT. The active-site Proton acceptor is Asp14. Positions 14 and 41 each coordinate Mg(2+). IMP-binding positions include 14–17, 39–42, Thr130, Arg144, Gln225, Thr240, and Arg304; these read DEGK and NAGH. His42 functions as the Proton donor in the catalytic mechanism. Residue 300–306 coordinates substrate; it reads STTGRKR. GTP contacts are provided by residues Arg306, 332–334, and 414–416; these read KLD and STG.

The protein belongs to the adenylosuccinate synthetase family. In terms of assembly, homodimer. It depends on Mg(2+) as a cofactor.

The protein localises to the cytoplasm. The catalysed reaction is IMP + L-aspartate + GTP = N(6)-(1,2-dicarboxyethyl)-AMP + GDP + phosphate + 2 H(+). Its pathway is purine metabolism; AMP biosynthesis via de novo pathway; AMP from IMP: step 1/2. Functionally, plays an important role in the de novo pathway of purine nucleotide biosynthesis. Catalyzes the first committed step in the biosynthesis of AMP from IMP. The sequence is that of Adenylosuccinate synthetase from Buchnera aphidicola subsp. Acyrthosiphon pisum (strain APS) (Acyrthosiphon pisum symbiotic bacterium).